A 445-amino-acid chain; its full sequence is Xylose isomerase (445 aa).

Active-site residues include His-107 and Asp-110. 7 residues coordinate Mg(2+): Glu-238, Glu-274, His-277, Asp-302, Asp-313, Asp-315, and Asp-345.

Belongs to the xylose isomerase family. As to quaternary structure, homotetramer. Mg(2+) is required as a cofactor.

Its subcellular location is the cytoplasm. It carries out the reaction alpha-D-xylose = alpha-D-xylulofuranose. The polypeptide is Xylose isomerase (xylA) (Bacillus spizizenii (strain ATCC 23059 / NRRL B-14472 / W23) (Bacillus subtilis subsp. spizizenii)).